The following is a 176-amino-acid chain: Large ribosomal subunit protein uL6 (176 aa).

The protein belongs to the universal ribosomal protein uL6 family. As to quaternary structure, part of the 50S ribosomal subunit.

In terms of biological role, this protein binds to the 23S rRNA, and is important in its secondary structure. It is located near the subunit interface in the base of the L7/L12 stalk, and near the tRNA binding site of the peptidyltransferase center. The chain is Large ribosomal subunit protein uL6 from Burkholderia thailandensis (strain ATCC 700388 / DSM 13276 / CCUG 48851 / CIP 106301 / E264).